Here is a 314-residue protein sequence, read N- to C-terminus: Small ribosomal subunit biogenesis GTPase RsgA (314 aa).

The segment at 1–21 is disordered; sequence MKRAPTKQPAKPAARGGERAQ. One can recognise a CP-type G domain in the interval 85-246; that stretch reads SDQFKSKLFA…LIDSPGFQEF (162 aa). GTP is bound by residues 134–137 and 188–196; these read NKID and GQSGMGKST. Positions 270, 275, 277, and 283 each coordinate Zn(2+).

Belongs to the TRAFAC class YlqF/YawG GTPase family. RsgA subfamily. As to quaternary structure, monomer. Associates with 30S ribosomal subunit, binds 16S rRNA. Requires Zn(2+) as cofactor.

It localises to the cytoplasm. In terms of biological role, one of several proteins that assist in the late maturation steps of the functional core of the 30S ribosomal subunit. Helps release RbfA from mature subunits. May play a role in the assembly of ribosomal proteins into the subunit. Circularly permuted GTPase that catalyzes slow GTP hydrolysis, GTPase activity is stimulated by the 30S ribosomal subunit. The polypeptide is Small ribosomal subunit biogenesis GTPase RsgA (Burkholderia pseudomallei (strain 1106a)).